We begin with the raw amino-acid sequence, 250 residues long: Cobalt transport protein CbiM (250 aa).

An N-terminal signal peptide occupies residues 1–27 (MKKPLFFIASACVTIYILFALSPSVYA). The next 6 membrane-spanning stretches (helical) occupy residues 33–53 (GFLPWQWALVWWLLFLPFFLV), 70–90 (LLLALATAFTFVLSALKIPSV), 102–122 (LGALLFGPFVMTVIGTAVLLF), 134–154 (TLGANAFSMAVVGPLVAYVLF), 168–188 (VFLAAMMADLATYVMTSIQLA), and 208–228 (IFAVTQIPLAITEGLLTVVVW).

The protein belongs to the CbiM family. As to quaternary structure, forms an energy-coupling factor (ECF) transporter complex composed of an ATP-binding protein (A component, CbiO), a transmembrane protein (T component, CbiQ) and 2 possible substrate-capture proteins (S components, CbiM and CbiN) of unknown stoichimetry.

The protein resides in the cell membrane. The protein operates within cofactor biosynthesis; adenosylcobalamin biosynthesis. In terms of biological role, part of the energy-coupling factor (ECF) transporter complex CbiMNOQ involved in cobalt import. This chain is Cobalt transport protein CbiM, found in Anoxybacillus flavithermus (strain DSM 21510 / WK1).